Reading from the N-terminus, the 1568-residue chain is Pentafunctional AROM polypeptide (1568 aa).

Positions 1–380 are 3-dehydroquinate synthase; sequence MSQVEKVSIL…YQLKAHEVSK (380 aa). Residues 43 to 45, 81 to 84, 112 to 114, and Asp-117 contribute to the NAD(+) site; these read DSN, ENNK, and GGV. Residue Arg-128 participates in 7-phospho-2-dehydro-3-deoxy-D-arabino-heptonate binding. Position 137–138 (137–138) interacts with NAD(+); the sequence is TT. Asp-144 and Lys-150 together coordinate 7-phospho-2-dehydro-3-deoxy-D-arabino-heptonate. Lys-159 provides a ligand contact to NAD(+). 7-phospho-2-dehydro-3-deoxy-D-arabino-heptonate is bound at residue Asn-160. Residues 177-180 and Asn-188 each bind NAD(+); that span reads FLTT. Glu-192 contributes to the Zn(2+) binding site. 7-phospho-2-dehydro-3-deoxy-D-arabino-heptonate contacts are provided by residues 192 to 195 and Lys-244; that span reads EVVK. The active-site Proton acceptor; for 3-dehydroquinate synthase activity is the Glu-254. Residues 258–262 and His-265 each bind 7-phospho-2-dehydro-3-deoxy-D-arabino-heptonate; that span reads RNLLN. His-265 is a binding site for Zn(2+). His-269 acts as the Proton acceptor; for 3-dehydroquinate synthase activity in catalysis. 7-phospho-2-dehydro-3-deoxy-D-arabino-heptonate-binding residues include His-281 and Lys-352. Residue His-281 participates in Zn(2+) binding. Residues 393-842 are EPSP synthase; the sequence is VHPFQEETTP…WDVLHTKFGV (450 aa). Cys-824 functions as the For EPSP synthase activity in the catalytic mechanism. The interval 867 to 1056 is shikimate kinase; sequence DKSIVVIGMR…VPKGRSFVLS (190 aa). 874 to 881 is a binding site for ATP; sequence GMRAAGKS. Positions 1057–1267 are 3-dehydroquinase; sequence LACSDLNDIA…SGNGQLTVGE (211 aa). Positions 1280–1568 are shikimate dehydrogenase; the sequence is RRNFYIVGNP…VYEAVVDDNV (289 aa).

It in the N-terminal section; belongs to the sugar phosphate cyclases superfamily. Dehydroquinate synthase family. The protein in the 2nd section; belongs to the EPSP synthase family. This sequence in the 3rd section; belongs to the shikimate kinase family. In the 4th section; belongs to the type-I 3-dehydroquinase family. It in the C-terminal section; belongs to the shikimate dehydrogenase family. In terms of assembly, homodimer. The cofactor is Zn(2+).

Its subcellular location is the cytoplasm. It catalyses the reaction 7-phospho-2-dehydro-3-deoxy-D-arabino-heptonate = 3-dehydroquinate + phosphate. The catalysed reaction is 3-dehydroquinate = 3-dehydroshikimate + H2O. It carries out the reaction shikimate + NADP(+) = 3-dehydroshikimate + NADPH + H(+). The enzyme catalyses shikimate + ATP = 3-phosphoshikimate + ADP + H(+). It catalyses the reaction 3-phosphoshikimate + phosphoenolpyruvate = 5-O-(1-carboxyvinyl)-3-phosphoshikimate + phosphate. The protein operates within metabolic intermediate biosynthesis; chorismate biosynthesis; chorismate from D-erythrose 4-phosphate and phosphoenolpyruvate: step 2/7. It functions in the pathway metabolic intermediate biosynthesis; chorismate biosynthesis; chorismate from D-erythrose 4-phosphate and phosphoenolpyruvate: step 3/7. It participates in metabolic intermediate biosynthesis; chorismate biosynthesis; chorismate from D-erythrose 4-phosphate and phosphoenolpyruvate: step 4/7. Its pathway is metabolic intermediate biosynthesis; chorismate biosynthesis; chorismate from D-erythrose 4-phosphate and phosphoenolpyruvate: step 5/7. The protein operates within metabolic intermediate biosynthesis; chorismate biosynthesis; chorismate from D-erythrose 4-phosphate and phosphoenolpyruvate: step 6/7. In terms of biological role, the AROM polypeptide catalyzes 5 consecutive enzymatic reactions in prechorismate polyaromatic amino acid biosynthesis. This chain is Pentafunctional AROM polypeptide, found in Clavispora lusitaniae (strain ATCC 42720) (Yeast).